Reading from the N-terminus, the 317-residue chain is MTDKLTSLRQVTTVVADTGDIAAMKLYQPQDATTNPSLILNAAQIPEYRKLIDEAIAWAREQSSDRKQQVVDATDKLAVNIGLEILKLIPGRISTEVDARLSYDTEASVAKAKHLIKLYNDAGISNERILIKLASTWQGICAAEQLEKEGINCNLTLLFSFAQARACAEAGVFLISPFVGRILDWYKANGDKKEFAPHEDPGVVSVSEIYDYYKEHGYETVVMGASFRNVGEILELAGCDRLTIAPALLKELSESEGEVVRKLSYVGDVKVRPARMTEAEFYWQHNQDPMAIDKLADGIRKFAIDQEKLEKMIADLL.

Catalysis depends on K132, which acts as the Schiff-base intermediate with substrate.

Belongs to the transaldolase family. Type 1 subfamily. In terms of assembly, homodimer.

It localises to the cytoplasm. The catalysed reaction is D-sedoheptulose 7-phosphate + D-glyceraldehyde 3-phosphate = D-erythrose 4-phosphate + beta-D-fructose 6-phosphate. The protein operates within carbohydrate degradation; pentose phosphate pathway; D-glyceraldehyde 3-phosphate and beta-D-fructose 6-phosphate from D-ribose 5-phosphate and D-xylulose 5-phosphate (non-oxidative stage): step 2/3. Its function is as follows. Transaldolase is important for the balance of metabolites in the pentose-phosphate pathway. The sequence is that of Transaldolase 2 from Pectobacterium atrosepticum (strain SCRI 1043 / ATCC BAA-672) (Erwinia carotovora subsp. atroseptica).